The following is a 2603-amino-acid chain: Ankyrin repeat domain-containing protein 17 (2603 aa).

An N-acetylmethionine modification is found at Met1. 2 stretches are compositionally biased toward low complexity: residues 1–34 and 42–53; these read MEKA…AAAE and SSRARSASSPRG. Residues 1 to 143 form a disordered region; the sequence is MEKATVPVAA…SFILDQDDLE (143 aa). Ser19 and Ser50 each carry phosphoserine. The span at 63–79 shows a compositional bias: basic residues; that stretch reads KKKPPQQQHHKAKRNRT. A compositionally biased stretch (low complexity) spans 84–94; sequence SSSESSSDSDN. Gly residues predominate over residues 95–111; that stretch reads SGGGGGGGGGGGGGGGT. Residues 116–131 show a composition bias toward acidic residues; sequence SEEEEDDDDEEEEVSE. At Ser156 the chain carries Phosphoserine. ANK repeat units follow at residues 233 to 262, 266 to 295, 300 to 329, 333 to 362, 366 to 395, 400 to 429, 433 to 462, 466 to 495, 499 to 528, 533 to 562, 563 to 592, 596 to 625, 629 to 658, 663 to 692, and 696 to 725; these read SDNR…SVNE, EGES…NVED, GDIT…DVNA, TGNT…SIED, NGHT…GINT, FKES…DQEH, EMHT…QVNM, SFES…SLEE, EGYT…NINA, TQET…DIEL, GCST…NVHA, TGDT…DLEH, GGRT…NVNR, NDHT…DPTH, and DGST…NLLS. A Glycyl lysine isopeptide (Lys-Gly) (interchain with G-Cter in SUMO2) cross-link involves residue Lys318. Ser803 is subject to Phosphoserine. ANK repeat units follow at residues 1082–1111, 1115–1144, 1149–1178, 1182–1211, 1217–1246, 1251–1280, 1284–1313, 1319–1348, 1352–1381, and 1385–1414; these read NHDT…SIEH, KGFT…DIEA, TKDT…NKEH, SDYT…EINS, LGIS…DINA, NRNT…NVEH, TGLT…DVNA, SRDT…HIDV, KGNT…DVDA, and RKIT…QFPS. Residues 1442–1526 adopt a coiled-coil conformation; sequence VQAKDRQAAE…EKEKLKVEDE (85 aa). At Ser1457 the chain carries Phosphoserine. 2 disordered regions span residues 1479–1500 and 1517–1717; these read AKRE…RKLE and EKEK…QKRE. Residues 1481 to 1491 are compositionally biased toward basic residues; that stretch reads REKRKEKRRKK. 3 stretches are compositionally biased toward low complexity: residues 1531–1550, 1602–1611, and 1620–1632; these read TEPP…TWTT, ESKSSSTSES, and SSCS…SNSS. Phosphoserine is present on residues Ser1635 and Ser1639. 2 stretches are compositionally biased toward polar residues: residues 1642–1652 and 1675–1703; these read VVTTTVSSKKQ and LSET…SPNG. 3 positions are modified to phosphoserine: Ser1696, Ser1700, and Ser1709. A KH domain is found at 1725 to 1789; it reads RRSKKVSVPS…ESTRQATQLI (65 aa). At Arg1874 the chain carries Asymmetric dimethylarginine. Disordered regions lie at residues 1906 to 1995, 2011 to 2192, and 2273 to 2332; these read PRLP…PSVR, TTVT…HKNS, and VVSS…YGSV. Composition is skewed to low complexity over residues 1950 to 1995 and 2011 to 2028; these read SNQN…PSVR and TTVT…TNAT. A phosphoserine mark is found at Ser2042, Ser2044, Ser2045, Ser2047, Ser2059, and Ser2067. A compositionally biased stretch (polar residues) spans 2066-2078; the sequence is ASPNKVASSSEQE. Residues 2095 to 2106 are compositionally biased toward low complexity; the sequence is SSSSSGSSSAHS. 2 stretches are compositionally biased toward polar residues: residues 2107-2127 and 2273-2303; these read NQQQ…QQSQ and VVSS…SDTS. Pro residues predominate over residues 2308–2318; it reads FRPPLQRPAPS. A phosphoserine mark is found at Ser2373 and Ser2401. The disordered stretch occupies residues 2381-2423; that stretch reads CSSASNDSSAQSVSSGVRAPSPAPSSVPLGSEKPSNVSQDRKV. A compositionally biased stretch (low complexity) spans 2382–2411; the sequence is SSASNDSSAQSVSSGVRAPSPAPSSVPLGS.

As to quaternary structure, interacts (via N-terminus) with NOD2. Interacts with CDK2, MCM3, MCM5, MCM7, CDC6 and PCNA. Interacts with MAVS and IFIH1. Interacts (via the second ankyrin repeat cluster) with DDX58. In terms of assembly, (Microbial infection) Interacts with enterovirus 71/EV71 capsid protein VP1. Phosphorylated by CDK2. Ubiquitously expressed.

Its subcellular location is the cytoplasm. The protein resides in the nucleus. Its function is as follows. Could play pivotal roles in cell cycle and DNA regulation. Involved in innate immune defense against viruse by positively regulating the viral dsRNA receptors DDX58 and IFIH1 signaling pathways. Involves in NOD2- and NOD1-mediated responses to bacteria suggesting a role in innate antibacterial immune pathways too. Target of enterovirus 71 which is the major etiological agent of HFMD (hand, foot and mouth disease). Could play a central role for the formation and/or maintenance of the blood vessels of the circulation system. The polypeptide is Ankyrin repeat domain-containing protein 17 (ANKRD17) (Homo sapiens (Human)).